Consider the following 262-residue polypeptide: Matrilysin (262 aa).

Residues 1–12 form the signal peptide; it reads LCVLCLLPQSPA. The propeptide at 13–89 is activation peptide; sequence LPLPREAGGH…PRCGLPDTGE (77 aa). Positions 80–87 match the Cysteine switch motif; that stretch reads PRCGLPDT. Residue Cys82 coordinates Zn(2+). Residue Asp148 participates in Ca(2+) binding. Zn(2+) contacts are provided by His158 and Asp160. Residues Asp165, Gly166, Gly168, and Thr170 each coordinate Ca(2+). His173 is a Zn(2+) binding site. Ca(2+)-binding residues include Gly180, Gly182, and Asp184. A Zn(2+)-binding site is contributed by His186. Residues Asp188 and Glu191 each coordinate Ca(2+). Residue His209 participates in Zn(2+) binding. The active site involves Glu210. Residues His213 and His219 each coordinate Zn(2+).

It belongs to the peptidase M10A family. Ca(2+) serves as cofactor. It depends on Zn(2+) as a cofactor.

It is found in the secreted. Its subcellular location is the extracellular space. It localises to the extracellular matrix. The enzyme catalyses Cleavage of 14-Ala-|-Leu-15 and 16-Tyr-|-Leu-17 in B chain of insulin. No action on collagen types I, II, IV, V. Cleaves gelatin chain alpha2(I) &gt; alpha1(I).. Functionally, degrades casein, gelatins of types I, III, IV, and V, and fibronectin. Activates procollagenase. The chain is Matrilysin (MMP7) from Felis catus (Cat).